The sequence spans 234 residues: Phosphoribosylaminoimidazole-succinocarboxamide synthase (234 aa).

Belongs to the SAICAR synthetase family.

The catalysed reaction is 5-amino-1-(5-phospho-D-ribosyl)imidazole-4-carboxylate + L-aspartate + ATP = (2S)-2-[5-amino-1-(5-phospho-beta-D-ribosyl)imidazole-4-carboxamido]succinate + ADP + phosphate + 2 H(+). Its pathway is purine metabolism; IMP biosynthesis via de novo pathway; 5-amino-1-(5-phospho-D-ribosyl)imidazole-4-carboxamide from 5-amino-1-(5-phospho-D-ribosyl)imidazole-4-carboxylate: step 1/2. The protein is Phosphoribosylaminoimidazole-succinocarboxamide synthase of Clostridium botulinum (strain ATCC 19397 / Type A).